The following is a 425-amino-acid chain: Serine--tRNA ligase (425 aa).

L-serine is bound at residue 230-232 (TAE). 261-263 (RSE) lines the ATP pocket. Residue Glu284 coordinates L-serine. Position 348 to 351 (348 to 351 (EISS)) interacts with ATP. Position 384 (Ser384) interacts with L-serine.

It belongs to the class-II aminoacyl-tRNA synthetase family. Type-1 seryl-tRNA synthetase subfamily. As to quaternary structure, homodimer. The tRNA molecule binds across the dimer.

Its subcellular location is the cytoplasm. It carries out the reaction tRNA(Ser) + L-serine + ATP = L-seryl-tRNA(Ser) + AMP + diphosphate + H(+). The catalysed reaction is tRNA(Sec) + L-serine + ATP = L-seryl-tRNA(Sec) + AMP + diphosphate + H(+). Its pathway is aminoacyl-tRNA biosynthesis; selenocysteinyl-tRNA(Sec) biosynthesis; L-seryl-tRNA(Sec) from L-serine and tRNA(Sec): step 1/1. Catalyzes the attachment of serine to tRNA(Ser). Is also able to aminoacylate tRNA(Sec) with serine, to form the misacylated tRNA L-seryl-tRNA(Sec), which will be further converted into selenocysteinyl-tRNA(Sec). The protein is Serine--tRNA ligase of Streptococcus sanguinis (strain SK36).